A 391-amino-acid chain; its full sequence is MKRLFTSESVTEGHPDKMCDQISDAILDAILAKDSNARVACETCTTTGLVMVMGEISTNCYVDIPKVVRETVREIGYDRAKYGFDCDTCSVMTTIDEQSADIAMGVDEALESKKGQKDEVEAVGAGDQGMMFGFATNETDAYMPLPIYMAHKLSRRLTEVRKDGTLDYLRPDGKTQVTVEYENNKPKRIDTIVISTQHGEEVSLETIEKDIKEHVINAVVPAELLDAETRYFINPTGRFVVGGPQGDSGLTGRKIIVDTYGGYGRHGGGAFSGKDSTKVDRSAAYAARWVAKNLVAAGIADKLEIQLAYAIGVAKPVSIEIETFGTGKMPEDKIVEIVEKVFDLRPGAIIRDLDLRKPIFKQTAAYGHFGRTDLDLPWERLNKIEEIKKYI.

Histidine 14 contacts ATP. Residue aspartate 16 coordinates Mg(2+). K(+) is bound at residue glutamate 42. L-methionine is bound by residues glutamate 55 and glutamine 98. A flexible loop region spans residues 98–108 (QSADIAMGVDE). ATP is bound by residues 172–174 (DGK), 238–239 (RF), aspartate 247, 253–254 (RK), alanine 270, and lysine 274. Aspartate 247 is a binding site for L-methionine. Lysine 278 provides a ligand contact to L-methionine.

Belongs to the AdoMet synthase family. As to quaternary structure, homotetramer; dimer of dimers. It depends on Mg(2+) as a cofactor. K(+) is required as a cofactor.

The protein resides in the cytoplasm. The enzyme catalyses L-methionine + ATP + H2O = S-adenosyl-L-methionine + phosphate + diphosphate. The protein operates within amino-acid biosynthesis; S-adenosyl-L-methionine biosynthesis; S-adenosyl-L-methionine from L-methionine: step 1/1. In terms of biological role, catalyzes the formation of S-adenosylmethionine (AdoMet) from methionine and ATP. The overall synthetic reaction is composed of two sequential steps, AdoMet formation and the subsequent tripolyphosphate hydrolysis which occurs prior to release of AdoMet from the enzyme. The sequence is that of S-adenosylmethionine synthase from Clostridium botulinum (strain Alaska E43 / Type E3).